The following is a 231-amino-acid chain: GSK-3-binding protein FRAT2 (231 aa).

2 disordered regions span residues 1 to 24 (MPCR…DDSF) and 53 to 109 (DTAH…PGAV). Over residues 7 to 23 (EEEEAGDEAEGEEDDDS) the composition is skewed to acidic residues. An involved in GSK-3 binding region spans residues 172-194 (DPHRLLQQLVLSGNLIKEAVRRL). The tract at residues 203-231 (ATSPASAPGSGGGRSGPDSVTLQPSGAWL) is disordered.

The protein belongs to the GSK-3-binding protein family. In terms of assembly, binds GSK-3 and prevents GSK-3-dependent phosphorylation.

Its function is as follows. Positively regulates the Wnt signaling pathway by stabilizing beta-catenin through the association with GSK-3. The protein is GSK-3-binding protein FRAT2 (Frat2) of Mus musculus (Mouse).